The following is a 205-amino-acid chain: Small ribosomal subunit protein uS4 (205 aa).

The segment at 19–45 is disordered; sequence IWGRPKSPVNRREYGPGQHGQRRKGKL. An S4 RNA-binding domain is found at 94–157; it reads SRLDAVVYRA…KQLAIVLEAV (64 aa).

The protein belongs to the universal ribosomal protein uS4 family. In terms of assembly, part of the 30S ribosomal subunit. Contacts protein S5. The interaction surface between S4 and S5 is involved in control of translational fidelity.

Functionally, one of the primary rRNA binding proteins, it binds directly to 16S rRNA where it nucleates assembly of the body of the 30S subunit. In terms of biological role, with S5 and S12 plays an important role in translational accuracy. This chain is Small ribosomal subunit protein uS4, found in Brucella suis biovar 1 (strain 1330).